The chain runs to 429 residues: Queuine tRNA-ribosyltransferase accessory subunit 2 (429 aa).

C330, C332, C335, and H361 together coordinate Zn(2+).

The protein belongs to the queuine tRNA-ribosyltransferase family. QTRT2 subfamily. As to quaternary structure, heterodimer of a catalytic subunit and an accessory subunit. Requires Zn(2+) as cofactor.

The protein localises to the cytoplasm. Its function is as follows. Non-catalytic subunit of the queuine tRNA-ribosyltransferase (TGT) that catalyzes the base-exchange of a guanine (G) residue with queuine (Q) at position 34 (anticodon wobble position) in tRNAs with GU(N) anticodons (tRNA-Asp, -Asn, -His and -Tyr), resulting in the hypermodified nucleoside queuosine (7-(((4,5-cis-dihydroxy-2-cyclopenten-1-yl)amino)methyl)-7-deazaguanosine). The protein is Queuine tRNA-ribosyltransferase accessory subunit 2 of Culex quinquefasciatus (Southern house mosquito).